The following is a 673-amino-acid chain: UvrABC system protein B (673 aa).

In terms of domain architecture, Helicase ATP-binding spans 26-183; sequence EGLEDGLAHQ…RRLAELQYTR (158 aa). 39–46 is an ATP binding site; the sequence is GVTGSGKT. The Beta-hairpin signature appears at 92–115; sequence YYDYYQPEAYVPSSDTFIEKDASV. Residues 431–597 enclose the Helicase C-terminal domain; that stretch reads QVDDLLSEIR…GLNKKVVDIL (167 aa). Positions 633–668 constitute a UVR domain; sequence QQKIHELEGQMMQHAQNLEFEEAAQIRDQLHQLREL.

It belongs to the UvrB family. Forms a heterotetramer with UvrA during the search for lesions. Interacts with UvrC in an incision complex.

It localises to the cytoplasm. In terms of biological role, the UvrABC repair system catalyzes the recognition and processing of DNA lesions. A damage recognition complex composed of 2 UvrA and 2 UvrB subunits scans DNA for abnormalities. Upon binding of the UvrA(2)B(2) complex to a putative damaged site, the DNA wraps around one UvrB monomer. DNA wrap is dependent on ATP binding by UvrB and probably causes local melting of the DNA helix, facilitating insertion of UvrB beta-hairpin between the DNA strands. Then UvrB probes one DNA strand for the presence of a lesion. If a lesion is found the UvrA subunits dissociate and the UvrB-DNA preincision complex is formed. This complex is subsequently bound by UvrC and the second UvrB is released. If no lesion is found, the DNA wraps around the other UvrB subunit that will check the other stand for damage. The protein is UvrABC system protein B of Salmonella arizonae (strain ATCC BAA-731 / CDC346-86 / RSK2980).